A 236-amino-acid chain; its full sequence is tRNA (guanine-N(1)-)-methyltransferase (236 aa).

Residues glycine 114 and 134–139 (IGDYIL) each bind S-adenosyl-L-methionine.

This sequence belongs to the RNA methyltransferase TrmD family. In terms of assembly, homodimer.

The protein localises to the cytoplasm. The enzyme catalyses guanosine(37) in tRNA + S-adenosyl-L-methionine = N(1)-methylguanosine(37) in tRNA + S-adenosyl-L-homocysteine + H(+). Specifically methylates guanosine-37 in various tRNAs. This Wolbachia pipientis wMel protein is tRNA (guanine-N(1)-)-methyltransferase.